The primary structure comprises 163 residues: Shikimate kinase (163 aa).

Position 10–15 (10–15) interacts with ATP; sequence GVGKTT. Position 14 (Thr-14) interacts with Mg(2+). Residues Asp-28, Arg-52, and Gly-75 each contribute to the substrate site. Arg-116 is an ATP binding site. Substrate is bound at residue Arg-134. Arg-151 contacts ATP.

Belongs to the shikimate kinase family. As to quaternary structure, monomer. Mg(2+) is required as a cofactor.

The protein localises to the cytoplasm. It catalyses the reaction shikimate + ATP = 3-phosphoshikimate + ADP + H(+). Its pathway is metabolic intermediate biosynthesis; chorismate biosynthesis; chorismate from D-erythrose 4-phosphate and phosphoenolpyruvate: step 5/7. Its function is as follows. Catalyzes the specific phosphorylation of the 3-hydroxyl group of shikimic acid using ATP as a cosubstrate. The polypeptide is Shikimate kinase (Streptococcus pyogenes serotype M12 (strain MGAS2096)).